A 90-amino-acid chain; its full sequence is Small ribosomal subunit protein uS15 (90 aa).

This sequence belongs to the universal ribosomal protein uS15 family. Part of the 30S ribosomal subunit. Forms a bridge to the 50S subunit in the 70S ribosome, contacting the 23S rRNA.

Functionally, one of the primary rRNA binding proteins, it binds directly to 16S rRNA where it helps nucleate assembly of the platform of the 30S subunit by binding and bridging several RNA helices of the 16S rRNA. Forms an intersubunit bridge (bridge B4) with the 23S rRNA of the 50S subunit in the ribosome. This Blochmanniella floridana protein is Small ribosomal subunit protein uS15.